The following is a 240-amino-acid chain: tRNA pseudouridine synthase B (240 aa).

Aspartate 54 functions as the Nucleophile in the catalytic mechanism.

This sequence belongs to the pseudouridine synthase TruB family. Type 1 subfamily.

It catalyses the reaction uridine(55) in tRNA = pseudouridine(55) in tRNA. Its function is as follows. Responsible for synthesis of pseudouridine from uracil-55 in the psi GC loop of transfer RNAs. This chain is tRNA pseudouridine synthase B, found in Chlorobium phaeovibrioides (strain DSM 265 / 1930) (Prosthecochloris vibrioformis (strain DSM 265)).